A 348-amino-acid polypeptide reads, in one-letter code: MAEKVLVTGGAGYIGSHTVLELLEAGYLPVVIDNFHNAFRGGGSLPESLRRVQELTGRSVEFEEMDILDQGALQRLFKKYSFMAVIHFAGLKAVGESVQKPLDYYRVNLTGTIQLLEIMKAHGVKNLVFSSSATVYGNPQYLPLDEAHPTGGCTNPYGKSKFFIEEMIRDLCQADKTWNAVLLRYFNPTGAHASGCIGEDPQGIPNNLMPYVSQVAIGRREALNVFGNDYDTEDGTGVRDYIHVVDLAKGHIAALRKLKEQCGCRIYNLGTGTGYSVLQMVQAMEKASGKKIPYKVVARREGDVAACYANPSLAQEELGWTAALGLDRMCEDLWRWQKQNPSGFGTQA.

NAD(+)-binding positions include 12–14 (GYI), 33–37 (DNFHN), 66–67 (DI), F88, and K92. Substrate is bound at residue 132 to 134 (SAT). Y157 functions as the Proton acceptor in the catalytic mechanism. NAD(+)-binding residues include K161 and Y185. Residues 185–187 (YFN), 206–208 (NNL), 224–226 (NVF), R239, and 300–303 (REGD) contribute to the substrate site.

The protein belongs to the NAD(P)-dependent epimerase/dehydratase family. As to quaternary structure, homodimer. Requires NAD(+) as cofactor.

It carries out the reaction UDP-alpha-D-glucose = UDP-alpha-D-galactose. It catalyses the reaction UDP-N-acetyl-alpha-D-glucosamine = UDP-N-acetyl-alpha-D-galactosamine. The protein operates within carbohydrate metabolism; galactose metabolism. Catalyzes two distinct but analogous reactions: the reversible epimerization of UDP-glucose to UDP-galactose and the reversible epimerization of UDP-N-acetylglucosamine to UDP-N-acetylgalactosamine. The reaction with UDP-Gal plays a critical role in the Leloir pathway of galactose catabolism in which galactose is converted to the glycolytic intermediate glucose 6-phosphate. It contributes to the catabolism of dietary galactose and enables the endogenous biosynthesis of both UDP-Gal and UDP-GalNAc when exogenous sources are limited. Both UDP-sugar interconversions are important in the synthesis of glycoproteins and glycolipids. The polypeptide is UDP-glucose 4-epimerase (Homo sapiens (Human)).